The following is a 204-amino-acid chain: Thymidylate kinase (204 aa).

7–14 (GGEGVGKT) contacts ATP.

It belongs to the thymidylate kinase family.

It carries out the reaction dTMP + ATP = dTDP + ADP. In terms of biological role, phosphorylation of dTMP to form dTDP in both de novo and salvage pathways of dTTP synthesis. This Synechococcus sp. (strain JA-3-3Ab) (Cyanobacteria bacterium Yellowstone A-Prime) protein is Thymidylate kinase.